The sequence spans 751 residues: MPNSVGKRFKPTKYIPVSTAATLLVGSTTLFFVFTCPWLTKAVSPVVPLYNGIVFLFVLANFSMATFMDPGVFPRADEDEDKDDDFRAPLYKNVEIKGIQVRMKWCATCHFYRPPRCSHCSVCDNCVEEFDHHCPWVNNCIGRRNYRYFFLFLLSLSVHMVGVFSFGLLFVLHHLETLSALHTTVTLVVMCVTGLFFIPVMGLTGFHMVLVARGRTTNEQVTGKFRGGVNPFTRGCGGNVKHVLCSPLAPRYIADPRKKIPVTVTPPFLRPDLSNRHISVKVSDNGIHSNILRSKSKTSLNGMDDKSIDAQPPLPPKADRYNQIKSQLTSSEESSLSSKPTNPSTPAMFKYRPSFGTMPKVHYHATGEKIVMCENGNPSAVLEERSHDYRSEPNLDLPDYRSAPLHRTYQSSPFQLDSFSTTSRSFSLKQGVNRADCTPLGGTKHETITSTPHRGVFSPGTLSGRNSSLSYDSLLTPSVAPSIGECAAHPGVPSMGFHSPYLPTKMCHVRGPELQRHAGPPSYSPVHIGAMYGRQSPLSRERERDPSPVRYDNLSKTIMASIQERKEFEEREKLMHRHVQGYANDSGVFDTAYGLPHGYPDGPRGPASREPTPPVCASRDNLMGYPPRTPVLRSSASSLVRAPRTSTTSLHTDGGGMNRTAELQYRSPVHQSHQSPTSVPRSPSYAHQKVAFISALERADSPHLGTREDIGQGKVNGQLKGQYGTPSGTPSRHTSVKKVTGVGGTTYEISV.

At 1 to 13 the chain is on the cytoplasmic side; that stretch reads MPNSVGKRFKPTK. Residues 14–34 form a helical membrane-spanning segment; the sequence is YIPVSTAATLLVGSTTLFFVF. Over 35 to 41 the chain is Extracellular; sequence TCPWLTK. The helical transmembrane segment at 42-62 threads the bilayer; it reads AVSPVVPLYNGIVFLFVLANF. The Cytoplasmic portion of the chain corresponds to 63-148; it reads SMATFMDPGV…NCIGRRNYRY (86 aa). A DHHC domain is found at 104–154; that stretch reads KWCATCHFYRPPRCSHCSVCDNCVEEFDHHCPWVNNCIGRRNYRYFFLFLL. Cysteine 134 acts as the S-palmitoyl cysteine intermediate in catalysis. A helical membrane pass occupies residues 149–169; that stretch reads FFLFLLSLSVHMVGVFSFGLL. Topologically, residues 170 to 185 are extracellular; sequence FVLHHLETLSALHTTV. Residues 186-206 form a helical membrane-spanning segment; the sequence is TLVVMCVTGLFFIPVMGLTGF. Over 207–751 the chain is Cytoplasmic; sequence HMVLVARGRT…VGGTTYEISV (545 aa). Disordered regions lie at residues 293–346, 437–461, 633–659, 666–685, and 703–736; these read RSKS…PSTP, CTPLGGTKHETITSTPHRGVFSPGT, RSSASSLVRAPRTSTTSLHTDGGGMNR, RSPVHQSHQSPTSVPRSPSY, and HLGTREDIGQGKVNGQLKGQYGTPSGTPSRHTSV. Low complexity predominate over residues 326–338; sequence SQLTSSEESSLSS. Polar residues-rich tracts occupy residues 633 to 651, 669 to 681, and 724 to 733; these read RSSASSLVRAPRTSTTSLH, VHQSHQSPTSVPR, and GTPSGTPSRH.

Belongs to the DHHC palmitoyltransferase family. ERF2/ZDHHC9 subfamily.

The protein resides in the golgi apparatus membrane. It is found in the mitochondrion membrane. The catalysed reaction is L-cysteinyl-[protein] + hexadecanoyl-CoA = S-hexadecanoyl-L-cysteinyl-[protein] + CoA. Its function is as follows. Palmitoyltransferase that catalyzes the addition of palmitate onto various protein substrates and therefore function in several unrelated biological processes. This is Palmitoyltransferase ZDHHC8B from Danio rerio (Zebrafish).